Consider the following 250-residue polypeptide: 3-deoxy-manno-octulosonate cytidylyltransferase (250 aa).

Belongs to the KdsB family.

The protein localises to the cytoplasm. The catalysed reaction is 3-deoxy-alpha-D-manno-oct-2-ulosonate + CTP = CMP-3-deoxy-beta-D-manno-octulosonate + diphosphate. Its pathway is nucleotide-sugar biosynthesis; CMP-3-deoxy-D-manno-octulosonate biosynthesis; CMP-3-deoxy-D-manno-octulosonate from 3-deoxy-D-manno-octulosonate and CTP: step 1/1. The protein operates within bacterial outer membrane biogenesis; lipopolysaccharide biosynthesis. Activates KDO (a required 8-carbon sugar) for incorporation into bacterial lipopolysaccharide in Gram-negative bacteria. The chain is 3-deoxy-manno-octulosonate cytidylyltransferase from Legionella pneumophila subsp. pneumophila (strain Philadelphia 1 / ATCC 33152 / DSM 7513).